The sequence spans 1052 residues: Protein HelA (1052 aa).

The next 13 helical transmembrane spans lie at 14-34, 121-141, 348-368, 369-389, 393-413, 450-470, 483-503, 537-557, 878-898, 903-923, 934-954, 979-999, and 1011-1031; these read WFVLLFTLVIAILGVYNFQRL, LPPGVETTLGPISTGLGEIFM, GALLVCVILFLFLGNIRAALI, TAMVIPLSMLLTITGMVENQI, LMSLGALDFGLIVDGAVIIVE, SIFGVFIITVVYLPILTLTGV, IIALLASMLFALTFVPAAVAI, VVISAAVALVVVSLGIAFHLG, LQIVVPITLLGIFLLLFISFG, ALLVFTGIPLALTGGVFALWL, VGFIALSGVAVLNGLVMITFI, PVLMTALVASLGFVPMALATG, and VVIGGIISSTFLTLLVLPGLY.

This sequence belongs to the resistance-nodulation-cell division (RND) (TC 2.A.6) family.

The protein resides in the cell inner membrane. Presumed to function with HelC and HelB in efflux of an unidentified substrate. This Legionella pneumophila protein is Protein HelA (helA).